The chain runs to 364 residues: Geranylgeranyl pyrophosphate synthase janG (364 aa).

Positions 83, 86, and 115 each coordinate isopentenyl diphosphate. Mg(2+)-binding residues include Asp122 and Asp126. Residue Arg131 coordinates dimethylallyl diphosphate. Arg132 lines the isopentenyl diphosphate pocket. 3 residues coordinate dimethylallyl diphosphate: Lys209, Thr210, and Gln243. Asp246 is a Mg(2+) binding site. Residues Asn250, Lys260, and Lys270 each coordinate dimethylallyl diphosphate.

This sequence belongs to the FPP/GGPP synthase family. The cofactor is Mg(2+).

The enzyme catalyses isopentenyl diphosphate + dimethylallyl diphosphate = (2E)-geranyl diphosphate + diphosphate. The catalysed reaction is isopentenyl diphosphate + (2E)-geranyl diphosphate = (2E,6E)-farnesyl diphosphate + diphosphate. It catalyses the reaction isopentenyl diphosphate + (2E,6E)-farnesyl diphosphate = (2E,6E,10E)-geranylgeranyl diphosphate + diphosphate. It participates in secondary metabolite biosynthesis. Its function is as follows. Geranylgeranyl pyrophosphate synthase; part of the gene cluster that mediates the biosynthesis of the indole diterpenes janthitremanes such as shearinine K or shearinine A. The geranylgeranyl diphosphate (GGPP) synthase janG catalyzes the first step in janthitremane biosynthesis via conversion of farnesyl pyrophosphate and isopentyl pyrophosphate into geranylgeranyl pyrophosphate (GGPP). Condensation of indole-3-glycerol phosphate with GGPP by the prenyl transferase janC then forms 3-geranylgeranylindole (3-GGI). Epoxidation by the FAD-dependent monooxygenase janM leads to a epoxidized-GGI that is substrate of the terpene cyclase janB for cyclization to yield paspaline. Paspaline is subsequently converted to 13-desoxypaspaline by the cytochrome P450 monooxygenase janP, via beta-PC-M6 in a series of alpha-face oxidations. The cytochrome P450 monooxygenase janQ is proposed to carry out sequential beta-face oxidation steps at C-7 and C-13 of 13-desoxypaspaline to form paspalicine and paspalinine respectively. The indole diterpene prenyltransferase janD may then convert paspalinine into shearinine K which is substrate of janO and/or additional enzymes for oxidation and cyclization to generate shearinine A. In Penicillium janthinellum (Penicillium vitale), this protein is Geranylgeranyl pyrophosphate synthase janG.